Consider the following 84-residue polypeptide: Putative lipoprotein RzoQ (84 aa).

An N-terminal signal peptide occupies residues 1 to 22 (MRNRNLLKFLPGLLICLIVLTS). C23 carries N-palmitoyl cysteine lipidation. C23 carries the S-diacylglycerol cysteine lipid modification.

The protein localises to the cell membrane. In Escherichia coli (strain K12), this protein is Putative lipoprotein RzoQ (rzoQ).